A 160-amino-acid chain; its full sequence is SsrA-binding protein (160 aa).

Belongs to the SmpB family.

It localises to the cytoplasm. Required for rescue of stalled ribosomes mediated by trans-translation. Binds to transfer-messenger RNA (tmRNA), required for stable association of tmRNA with ribosomes. tmRNA and SmpB together mimic tRNA shape, replacing the anticodon stem-loop with SmpB. tmRNA is encoded by the ssrA gene; the 2 termini fold to resemble tRNA(Ala) and it encodes a 'tag peptide', a short internal open reading frame. During trans-translation Ala-aminoacylated tmRNA acts like a tRNA, entering the A-site of stalled ribosomes, displacing the stalled mRNA. The ribosome then switches to translate the ORF on the tmRNA; the nascent peptide is terminated with the 'tag peptide' encoded by the tmRNA and targeted for degradation. The ribosome is freed to recommence translation, which seems to be the essential function of trans-translation. The sequence is that of SsrA-binding protein from Zymomonas mobilis subsp. mobilis (strain ATCC 31821 / ZM4 / CP4).